Here is a 243-residue protein sequence, read N- to C-terminus: MPIDIGKLGTTSTSAQSQSTFLFECSEPVPFEMAWLWQQQWQQQLFANPLAPQAVWLLQHQACYTLGRGASEANLLFDVNNPPAALHRIDRGGEVTHHLPGQLVVYPVLDLRRYQTDLHWYLRQLEQVLIDVLAVLGLAGERLQGLTGLWLEGRKVAAIGVGCRRWITQHGLALNVDCDLESFSAVVPCGLVGHPVGRLNQWIPGLTMAEVQPLMRQSLSDRFGLVWQIPEPLAKPGAFASDA.

Residues 49 to 227 (PLAPQAVWLL…SLSDRFGLVW (179 aa)) form the BPL/LPL catalytic domain. Residues 91-98 (RGGEVTHH), 158-160 (AIG), and 171-173 (GLA) each bind substrate. Catalysis depends on C189, which acts as the Acyl-thioester intermediate.

The protein belongs to the LipB family.

It localises to the cytoplasm. The catalysed reaction is octanoyl-[ACP] + L-lysyl-[protein] = N(6)-octanoyl-L-lysyl-[protein] + holo-[ACP] + H(+). It participates in protein modification; protein lipoylation via endogenous pathway; protein N(6)-(lipoyl)lysine from octanoyl-[acyl-carrier-protein]: step 1/2. Functionally, catalyzes the transfer of endogenously produced octanoic acid from octanoyl-acyl-carrier-protein onto the lipoyl domains of lipoate-dependent enzymes. Lipoyl-ACP can also act as a substrate although octanoyl-ACP is likely to be the physiological substrate. The sequence is that of Octanoyltransferase from Prochlorococcus marinus (strain MIT 9313).